Consider the following 396-residue polypeptide: Putative peptide chain release factor 1, mitochondrial (396 aa).

Residue Gln270 is modified to N5-methylglutamine.

Belongs to the prokaryotic/mitochondrial release factor family. In terms of processing, methylation of glutamine in the GGQ triplet is conserved from bacteria to mammals.

The protein localises to the mitochondrion. In Schizosaccharomyces pombe (strain 972 / ATCC 24843) (Fission yeast), this protein is Putative peptide chain release factor 1, mitochondrial.